The chain runs to 233 residues: DnaA regulatory inactivator Hda (233 aa).

It belongs to the DnaA family. HdA subfamily. In terms of assembly, the active form seems to be an ADP-bound monomer. Forms the RIDA complex (regulatory inactivation of DnaA) of ATP-DnaA, ADP-Hda and the DNA-loaded beta sliding clamp (dnaN).

Its function is as follows. Mediates the interaction of DNA replication initiator protein DnaA with DNA polymerase subunit beta sliding clamp (dnaN). Stimulates hydrolysis of ATP-DnaA to ADP-DnaA, rendering DnaA inactive for reinitiation, a process called regulatory inhibition of DnaA or RIDA. This chain is DnaA regulatory inactivator Hda, found in Shigella boydii serotype 4 (strain Sb227).